Consider the following 127-residue polypeptide: Fluoride-specific ion channel FluC (127 aa).

The next 4 membrane-spanning stretches (helical) occupy residues 4-24, 36-56, 68-88, and 98-118; these read PILA…GLGL, GTLV…AFFA, LVIT…AEIV, and WAMS…LAGI. Positions 75 and 78 each coordinate Na(+).

It belongs to the fluoride channel Fluc/FEX (TC 1.A.43) family.

It localises to the cell inner membrane. The enzyme catalyses fluoride(in) = fluoride(out). Na(+) is not transported, but it plays an essential structural role and its presence is essential for fluoride channel function. Functionally, fluoride-specific ion channel. Important for reducing fluoride concentration in the cell, thus reducing its toxicity. In Nitrosomonas europaea (strain ATCC 19718 / CIP 103999 / KCTC 2705 / NBRC 14298), this protein is Fluoride-specific ion channel FluC.